Reading from the N-terminus, the 242-residue chain is Type III pantothenate kinase (242 aa).

7–14 (DLGNSRFK) is an ATP binding site. Residues Tyr-91 and 98–101 (GVDR) contribute to the substrate site. Asp-100 functions as the Proton acceptor in the catalytic mechanism. Position 121 (Thr-121) interacts with ATP. Substrate is bound at residue Thr-171.

Belongs to the type III pantothenate kinase family. As to quaternary structure, homodimer. It depends on NH4(+) as a cofactor. Requires K(+) as cofactor.

Its subcellular location is the cytoplasm. It carries out the reaction (R)-pantothenate + ATP = (R)-4'-phosphopantothenate + ADP + H(+). The protein operates within cofactor biosynthesis; coenzyme A biosynthesis; CoA from (R)-pantothenate: step 1/5. Catalyzes the phosphorylation of pantothenate (Pan), the first step in CoA biosynthesis. In Xanthomonas oryzae pv. oryzae (strain MAFF 311018), this protein is Type III pantothenate kinase.